A 428-amino-acid chain; its full sequence is Glutamate-1-semialdehyde 2,1-aminomutase 1 (428 aa).

Position 267 is an N6-(pyridoxal phosphate)lysine (Lys267).

It belongs to the class-III pyridoxal-phosphate-dependent aminotransferase family. HemL subfamily. Homodimer. Pyridoxal 5'-phosphate serves as cofactor.

The protein resides in the cytoplasm. The enzyme catalyses (S)-4-amino-5-oxopentanoate = 5-aminolevulinate. Its pathway is porphyrin-containing compound metabolism; protoporphyrin-IX biosynthesis; 5-aminolevulinate from L-glutamyl-tRNA(Glu): step 2/2. The sequence is that of Glutamate-1-semialdehyde 2,1-aminomutase 1 from Staphylococcus aureus (strain Mu3 / ATCC 700698).